The primary structure comprises 316 residues: Olfactory receptor 4N4C (316 aa).

Over 1–26 (MKIANNTVVTEFILLGLTQSQDIQLL) the chain is Cytoplasmic. Residues 27 to 47 (VFVLILIFYLIILPGNFLIIF) form a helical membrane-spanning segment. The Extracellular portion of the chain corresponds to 48-56 (TIRSDPGLT). The helical transmembrane segment at 57 to 77 (APLYLFLGNLAFLDASYSFIV) threads the bilayer. Topologically, residues 78–99 (APRMLVDFLSEKKVISYRGCIT) are cytoplasmic. A disulfide bridge connects residues C97 and C179. The helical transmembrane segment at 100 to 120 (QLFFLHFLGGGEGLLLVVMAF) threads the bilayer. The Extracellular portion of the chain corresponds to 121 to 143 (DRYIAICRPLHCSTVMNPRACYA). Residues 144 to 164 (MMLALWLGGFVHSIIQVVLIL) form a helical membrane-spanning segment. At 165–204 (RLPFCGPNQLDNFFCDVRQVIKLACTDMFVVELLMVFNSG) the chain is on the cytoplasmic side. The helical transmembrane segment at 205–225 (LMTLLCFLGLLASYAVILCHV) threads the bilayer. Residues 226-243 (RRAASEGKNKAMSTCTTR) lie on the Extracellular side of the membrane. The chain crosses the membrane as a helical span at residues 244 to 264 (VIIILLMFGPAIFIYICPFRA). The Cytoplasmic segment spans residues 265 to 268 (LPAD). Residues 269–289 (KMVSLFHTVIFPLMNPMIYTL) form a helical membrane-spanning segment. Residues 290–316 (RNQEVKTSMKRLLSRHVVCQVDFIIRN) are Extracellular-facing.

This sequence belongs to the G-protein coupled receptor 1 family.

The protein resides in the membrane. In terms of biological role, odorant receptor. In Homo sapiens (Human), this protein is Olfactory receptor 4N4C.